A 327-amino-acid polypeptide reads, in one-letter code: Alkene monooxygenase system, ferredoxin--NAD(+) reductase component (327 aa).

The 89-residue stretch at 1–89 (MRLNDGRSFS…DLEINVRAGD (89 aa)) folds into the 2Fe-2S ferredoxin-type domain. 4 residues coordinate [2Fe-2S] cluster: Cys32, Cys37, Cys40, and Cys73. One can recognise an FAD-binding FR-type domain in the interval 96 to 194 (PRRHAARVTV…EGPYGRAYLR (99 aa)).

The protein belongs to the bacterial ring-hydroxylating dioxygenase ferredoxin reductase family. Monomer. The alkene monooxygenase multicomponent enzyme system is composed of an electron transfer component and a monooxygenase component interacting with the effector protein XamoD. The electron transfer component is composed of a ferredoxin reductase (XamoF) and a ferredoxin (XamoC), and the monooxygenase component is formed by a heterohexamer (dimer of heterotrimers) of two alpha subunits (XamoA), two beta subunits (XamoE) and two gamma subunits (XamoB). The cofactor is FAD. [2Fe-2S] cluster is required as a cofactor.

Its subcellular location is the cytoplasm. It catalyses the reaction 2 reduced [2Fe-2S]-[ferredoxin] + NAD(+) + H(+) = 2 oxidized [2Fe-2S]-[ferredoxin] + NADH. Functionally, reductase component of the alkene monooxygenase multicomponent enzyme system which catalyzes the O2- and NADH-dependent epoxidation of short chain (C2 to C6) alkenes to their corresponding epoxides. Ferredoxin reductase catalyzes the transfer of electrons from NADH to ferredoxin (XamoC). NADPH is also effective but with a rate approximately 3-fold lower than with NADH. In Xanthobacter autotrophicus (strain ATCC BAA-1158 / Py2), this protein is Alkene monooxygenase system, ferredoxin--NAD(+) reductase component.